The sequence spans 103 residues: MSEQKIRIRLKAFDHRLIDRSASEIVETAKRTGAQVRGPIPLPTKIERYTILVSPHADKDARDQYETRTHKRVLDIVDPNDKTVDALMKLELAAGVDVQIKLT.

Belongs to the universal ribosomal protein uS10 family. In terms of assembly, part of the 30S ribosomal subunit.

Functionally, involved in the binding of tRNA to the ribosomes. The polypeptide is Small ribosomal subunit protein uS10 (Xanthomonas axonopodis pv. citri (strain 306)).